A 231-amino-acid chain; its full sequence is Ninja-family protein AFP3 (231 aa).

Over residues Ala83 to Ala96 the composition is skewed to basic residues. A disordered region spans residues Ala83 to Gly152. The segment covering Gln130–Gly152 has biased composition (polar residues).

Belongs to the Ninja family. As to quaternary structure, forms a heterodimer with AFP2. Interacts with ABI5/DPBF1, DPBF2, AREB3/DPBF3, EEL/DPBF4, ABF1, ABF3/DPBF5 and ABF4/AREB2.

It localises to the nucleus. In terms of biological role, acts as a negative regulator of abscisic acid (ABA) response and stress responses. The chain is Ninja-family protein AFP3 (AFP3) from Arabidopsis thaliana (Mouse-ear cress).